The sequence spans 199 residues: Phosphoheptose isomerase (199 aa).

The 163-residue stretch at 36–198 folds into the SIS domain; that stretch reads MSQCLLNEHK…DRKLIPSSED (163 aa). 51–53 lines the substrate pocket; the sequence is NGG. Zn(2+) is bound by residues histidine 60 and glutamate 64. Residues glutamate 64, 93 to 94, 119 to 121, serine 124, and glutamine 174 each bind substrate; these read ND and STS. Residues glutamine 174 and histidine 182 each coordinate Zn(2+).

Belongs to the SIS family. GmhA subfamily. Homotetramer. The cofactor is Zn(2+).

It localises to the cytoplasm. It carries out the reaction 2 D-sedoheptulose 7-phosphate = D-glycero-alpha-D-manno-heptose 7-phosphate + D-glycero-beta-D-manno-heptose 7-phosphate. Its pathway is carbohydrate biosynthesis; D-glycero-D-manno-heptose 7-phosphate biosynthesis; D-glycero-alpha-D-manno-heptose 7-phosphate and D-glycero-beta-D-manno-heptose 7-phosphate from sedoheptulose 7-phosphate: step 1/1. Functionally, catalyzes the isomerization of sedoheptulose 7-phosphate in D-glycero-D-manno-heptose 7-phosphate. In Coxiella burnetii (strain RSA 331 / Henzerling II), this protein is Phosphoheptose isomerase.